A 208-amino-acid polypeptide reads, in one-letter code: LexA repressor (208 aa).

The H-T-H motif DNA-binding region spans 29-49; it reads VREICGAVGLSSTSTVHGHIN. Catalysis depends on for autocatalytic cleavage activity residues serine 129 and lysine 167.

Belongs to the peptidase S24 family. As to quaternary structure, homodimer.

The enzyme catalyses Hydrolysis of Ala-|-Gly bond in repressor LexA.. In terms of biological role, represses a number of genes involved in the response to DNA damage (SOS response), including recA and lexA. In the presence of single-stranded DNA, RecA interacts with LexA causing an autocatalytic cleavage which disrupts the DNA-binding part of LexA, leading to derepression of the SOS regulon and eventually DNA repair. This is LexA repressor from Limosilactobacillus fermentum (strain NBRC 3956 / LMG 18251) (Lactobacillus fermentum).